A 156-amino-acid chain; its full sequence is Transcription antitermination protein NusB (156 aa).

The protein belongs to the NusB family.

In terms of biological role, involved in transcription antitermination. Required for transcription of ribosomal RNA (rRNA) genes. Binds specifically to the boxA antiterminator sequence of the ribosomal RNA (rrn) operons. This is Transcription antitermination protein NusB from Rickettsia rickettsii (strain Iowa).